The primary structure comprises 95 residues: Aspartyl/glutamyl-tRNA(Asn/Gln) amidotransferase subunit C (95 aa).

This sequence belongs to the GatC family. Heterotrimer of A, B and C subunits.

The enzyme catalyses L-glutamyl-tRNA(Gln) + L-glutamine + ATP + H2O = L-glutaminyl-tRNA(Gln) + L-glutamate + ADP + phosphate + H(+). The catalysed reaction is L-aspartyl-tRNA(Asn) + L-glutamine + ATP + H2O = L-asparaginyl-tRNA(Asn) + L-glutamate + ADP + phosphate + 2 H(+). Functionally, allows the formation of correctly charged Asn-tRNA(Asn) or Gln-tRNA(Gln) through the transamidation of misacylated Asp-tRNA(Asn) or Glu-tRNA(Gln) in organisms which lack either or both of asparaginyl-tRNA or glutaminyl-tRNA synthetases. The reaction takes place in the presence of glutamine and ATP through an activated phospho-Asp-tRNA(Asn) or phospho-Glu-tRNA(Gln). In Nitrobacter winogradskyi (strain ATCC 25391 / DSM 10237 / CIP 104748 / NCIMB 11846 / Nb-255), this protein is Aspartyl/glutamyl-tRNA(Asn/Gln) amidotransferase subunit C.